The chain runs to 199 residues: Holliday junction branch migration complex subunit RuvA (199 aa).

The segment at 1 to 64 (MIGRLRGILL…DDAHLLYAFA (64 aa)) is domain I. Positions 65–143 (SEKERGLFRS…DMPESGVAGM (79 aa)) are domain II. The tract at residues 144–150 (RPDRVDG) is flexible linker. The tract at residues 151–199 (SAPGTVAEAVSALVALGYKPNEASRAVRRLDTEALTTEEIIRQALQRML) is domain III.

This sequence belongs to the RuvA family. Homotetramer. Forms an RuvA(8)-RuvB(12)-Holliday junction (HJ) complex. HJ DNA is sandwiched between 2 RuvA tetramers; dsDNA enters through RuvA and exits via RuvB. An RuvB hexamer assembles on each DNA strand where it exits the tetramer. Each RuvB hexamer is contacted by two RuvA subunits (via domain III) on 2 adjacent RuvB subunits; this complex drives branch migration. In the full resolvosome a probable DNA-RuvA(4)-RuvB(12)-RuvC(2) complex forms which resolves the HJ.

The protein resides in the cytoplasm. In terms of biological role, the RuvA-RuvB-RuvC complex processes Holliday junction (HJ) DNA during genetic recombination and DNA repair, while the RuvA-RuvB complex plays an important role in the rescue of blocked DNA replication forks via replication fork reversal (RFR). RuvA specifically binds to HJ cruciform DNA, conferring on it an open structure. The RuvB hexamer acts as an ATP-dependent pump, pulling dsDNA into and through the RuvAB complex. HJ branch migration allows RuvC to scan DNA until it finds its consensus sequence, where it cleaves and resolves the cruciform DNA. In Nitrosococcus oceani (strain ATCC 19707 / BCRC 17464 / JCM 30415 / NCIMB 11848 / C-107), this protein is Holliday junction branch migration complex subunit RuvA.